Reading from the N-terminus, the 248-residue chain is 1-(5-phosphoribosyl)-5-[(5-phosphoribosylamino)methylideneamino] imidazole-4-carboxamide isomerase (248 aa).

Asp8 functions as the Proton acceptor in the catalytic mechanism. Catalysis depends on Asp130, which acts as the Proton donor.

It belongs to the HisA/HisF family.

The protein localises to the cytoplasm. The enzyme catalyses 1-(5-phospho-beta-D-ribosyl)-5-[(5-phospho-beta-D-ribosylamino)methylideneamino]imidazole-4-carboxamide = 5-[(5-phospho-1-deoxy-D-ribulos-1-ylimino)methylamino]-1-(5-phospho-beta-D-ribosyl)imidazole-4-carboxamide. The protein operates within amino-acid biosynthesis; L-histidine biosynthesis; L-histidine from 5-phospho-alpha-D-ribose 1-diphosphate: step 4/9. The polypeptide is 1-(5-phosphoribosyl)-5-[(5-phosphoribosylamino)methylideneamino] imidazole-4-carboxamide isomerase (Alkalilimnicola ehrlichii (strain ATCC BAA-1101 / DSM 17681 / MLHE-1)).